A 104-amino-acid polypeptide reads, in one-letter code: Protein ArtA (104 aa).

The protein is Protein ArtA (artA) of Escherichia coli (strain K12).